The sequence spans 557 residues: Dihydroxy-acid dehydratase (557 aa).

Residue Asp78 participates in Mg(2+) binding. Residue Cys119 participates in [2Fe-2S] cluster binding. Asp120 and Lys121 together coordinate Mg(2+). N6-carboxylysine is present on Lys121. Cys192 is a [2Fe-2S] cluster binding site. Glu442 is a binding site for Mg(2+). The active-site Proton acceptor is the Ser468.

This sequence belongs to the IlvD/Edd family. Homodimer. The cofactor is [2Fe-2S] cluster. Mg(2+) is required as a cofactor.

It catalyses the reaction (2R)-2,3-dihydroxy-3-methylbutanoate = 3-methyl-2-oxobutanoate + H2O. It carries out the reaction (2R,3R)-2,3-dihydroxy-3-methylpentanoate = (S)-3-methyl-2-oxopentanoate + H2O. Its pathway is amino-acid biosynthesis; L-isoleucine biosynthesis; L-isoleucine from 2-oxobutanoate: step 3/4. It participates in amino-acid biosynthesis; L-valine biosynthesis; L-valine from pyruvate: step 3/4. In terms of biological role, functions in the biosynthesis of branched-chain amino acids. Catalyzes the dehydration of (2R,3R)-2,3-dihydroxy-3-methylpentanoate (2,3-dihydroxy-3-methylvalerate) into 2-oxo-3-methylpentanoate (2-oxo-3-methylvalerate) and of (2R)-2,3-dihydroxy-3-methylbutanoate (2,3-dihydroxyisovalerate) into 2-oxo-3-methylbutanoate (2-oxoisovalerate), the penultimate precursor to L-isoleucine and L-valine, respectively. This chain is Dihydroxy-acid dehydratase, found in Bacillus cereus (strain 03BB102).